The primary structure comprises 1209 residues: Major DNA-binding protein (1209 aa).

Residues Asn-290–Ser-312 are disordered. A zinc finger lies at Cys-503–His-516. A Required for filament formation motif is present at residues Phe-849–Trp-850. Residues Gln-1182–Leu-1209 form a required for nuclear localization region.

The protein belongs to the herpesviridae major DNA-binding protein family. In terms of assembly, homooligomers. Forms double-helical filaments necessary for the formation of replication compartments within the host nucleus. Interacts with the origin-binding protein. Interacts with the helicase primase complex; this interaction stimulates primer synthesis activity of the helicase-primase complex. Interacts with the DNA polymerase. Interacts with the alkaline exonuclease; this interaction increases its nuclease processivity.

The protein localises to the host nucleus. Its function is as follows. Plays several crucial roles in viral infection. Participates in the opening of the viral DNA origin to initiate replication by interacting with the origin-binding protein. May disrupt loops, hairpins and other secondary structures present on ssDNA to reduce and eliminate pausing of viral DNA polymerase at specific sites during elongation. Promotes viral DNA recombination by performing strand-transfer, characterized by the ability to transfer a DNA strand from a linear duplex to a complementary single-stranded DNA circle. Can also catalyze the renaturation of complementary single strands. Additionally, reorganizes the host cell nucleus, leading to the formation of prereplicative sites and replication compartments. This process is driven by the protein which can form double-helical filaments in the absence of DNA. The protein is Major DNA-binding protein of Equine herpesvirus 1 (strain Ab4p) (EHV-1).